A 153-amino-acid chain; its full sequence is Endoribonuclease YbeY (153 aa).

Positions 118, 122, and 128 each coordinate Zn(2+).

The protein belongs to the endoribonuclease YbeY family. Zn(2+) serves as cofactor.

The protein localises to the cytoplasm. Single strand-specific metallo-endoribonuclease involved in late-stage 70S ribosome quality control and in maturation of the 3' terminus of the 16S rRNA. The polypeptide is Endoribonuclease YbeY (Staphylococcus haemolyticus (strain JCSC1435)).